The following is a 259-amino-acid chain: Haloacid dehalogenase-like hydrolase domain-containing protein 2 (259 aa).

The Mg(2+) site is built by Asp-13 and Ser-15. Substrate-binding positions include 13–15 (DLS) and 46–47 (TN). Residues 49–71 (TKESKRDLLERLRKLEFDISEEE) are a coiled coil. The residue at position 50 (Lys-50) is an N6-succinyllysine. A substrate-binding site is contributed by Lys-179. Asp-204 provides a ligand contact to Mg(2+).

This sequence belongs to the HAD-like hydrolase superfamily. It depends on Mg(2+) as a cofactor.

This is Haloacid dehalogenase-like hydrolase domain-containing protein 2 (Hdhd2) from Rattus norvegicus (Rat).